Consider the following 334-residue polypeptide: MSLDIDQIALHQLIKRDEQTLDVVLRDSLLPTNAVVEEMMAELHRVYSAKSKAYGLFNEQSELADALKRSRKGDEDFLSFSRAATGRLRDELAKYPFAEGGVVLFCQYRYLAVEYLLISVLSSCHSMRVNEQLDLSTTHYLDINRADIVARIDLTEWETNPESTRYLTFLKGRVGRKVSDFFMDFLSAAEGLDTKAQNRGLLQAVDDYCADAELGKNERQAYRQQVYSYCNEQLQAGEEIALQALAQELPKLGEKNFQQFSAEQGYALEESFPADRGTLRQLTKFAGSGGGLSINFDALLLDERIFWDAATDTLTIKGTPPNLRDQLQRRAGSK.

This sequence belongs to the YejK family.

The protein localises to the cytoplasm. Its subcellular location is the nucleoid. This chain is Nucleoid-associated protein YPK_2796, found in Yersinia pseudotuberculosis serotype O:3 (strain YPIII).